Consider the following 191-residue polypeptide: Glutathione S-transferase Y-2 (191 aa).

Positions 2-80 (TFATVYIKPH…YIVAKGSKPE (79 aa)) constitute a GST N-terminal domain. Positions 85 to 191 (TTEERATNTR…VSQHPIIKNM (107 aa)) constitute a GST C-terminal domain.

Belongs to the GST superfamily.

The enzyme catalyses RX + glutathione = an S-substituted glutathione + a halide anion + H(+). In terms of biological role, conjugation of reduced glutathione to a wide number of exogenous and endogenous hydrophobic electrophiles. The protein is Glutathione S-transferase Y-2 (GSTY2) of Pichia kudriavzevii (Yeast).